The following is a 138-amino-acid chain: MKISTKGRYGLTIMIELAKKHGEGPTSLKSIAQTNNLSEHYLEQLVSPLRNAGLVKSIRGAYGGYVLGSEPDAITAGDIIRVLEGPISPVEVLEDEEPAKRELWIRIRDAVKEVLDSTTLEDLASYTDGEQEAYMFYI.

Residues 2–125 form the HTH rrf2-type domain; sequence KISTKGRYGL…DSTTLEDLAS (124 aa). Positions 28-51 form a DNA-binding region, H-T-H motif; the sequence is LKSIAQTNNLSEHYLEQLVSPLRN.

Homodimer. Forms homotetramers at higher concentrations of protein. Forms CymR(2):CysK(2) or CymR(4):CysK(4) complexes in the absence of O-acetylserine.

Master repressor of cysteine metabolism in B.subtilis. Controls the expression of genes involved either in cysteine synthesis from sulfide (cysK), sulfonates (ssu), or methionine (mccAB) or in cystine uptake (tcyP). Activity of CymR is positively regulated by CysK in response to cysteine availability. When cysteine is present, the pool of O-acetylserine (OAS) is low, which leads to the formation of a CymR-CysK complex and transcriptional repression of the CymR regulon occurs. In the absence of cysteine, the OAS pool is high and the CymR-CysK complex is mostly dissociated, leading to a faster dissociation of CymR from its DNA targets and the lifting of CymR-dependent repression. This Bacillus subtilis (strain 168) protein is HTH-type transcriptional regulator CymR (cymR).